We begin with the raw amino-acid sequence, 90 residues long: Small ribosomal subunit protein uS19 (90 aa).

It belongs to the universal ribosomal protein uS19 family.

Functionally, protein S19 forms a complex with S13 that binds strongly to the 16S ribosomal RNA. This Thioalkalivibrio sulfidiphilus (strain HL-EbGR7) protein is Small ribosomal subunit protein uS19.